Reading from the N-terminus, the 487-residue chain is Protein nucleotidyltransferase YdiU (487 aa).

Residues Gly-90, Gly-92, Arg-93, Lys-113, Asp-125, Gly-126, Arg-176, and Arg-183 each coordinate ATP. Catalysis depends on Asp-252, which acts as the Proton acceptor. Mg(2+) is bound by residues Asn-253 and Asp-262. Asp-262 serves as a coordination point for ATP.

It belongs to the SELO family. Mg(2+) is required as a cofactor. Mn(2+) serves as cofactor.

The catalysed reaction is L-seryl-[protein] + ATP = 3-O-(5'-adenylyl)-L-seryl-[protein] + diphosphate. It catalyses the reaction L-threonyl-[protein] + ATP = 3-O-(5'-adenylyl)-L-threonyl-[protein] + diphosphate. It carries out the reaction L-tyrosyl-[protein] + ATP = O-(5'-adenylyl)-L-tyrosyl-[protein] + diphosphate. The enzyme catalyses L-histidyl-[protein] + UTP = N(tele)-(5'-uridylyl)-L-histidyl-[protein] + diphosphate. The catalysed reaction is L-seryl-[protein] + UTP = O-(5'-uridylyl)-L-seryl-[protein] + diphosphate. It catalyses the reaction L-tyrosyl-[protein] + UTP = O-(5'-uridylyl)-L-tyrosyl-[protein] + diphosphate. Functionally, nucleotidyltransferase involved in the post-translational modification of proteins. It can catalyze the addition of adenosine monophosphate (AMP) or uridine monophosphate (UMP) to a protein, resulting in modifications known as AMPylation and UMPylation. In Pseudomonas fluorescens (strain Pf0-1), this protein is Protein nucleotidyltransferase YdiU.